Here is a 32-residue protein sequence, read N- to C-terminus: Alpha-amylase inhibitor AAI (32 aa).

Disulfide bonds link C1–C18, C8–C23, and C17–C31.

Endosperm.

Alpha-amylase inhibitor. It is active against alpha-amylases from Tribolium castaneum and Prostephanus truncatus larvae. In Amaranthus hypochondriacus (Prince-of-Wales feather), this protein is Alpha-amylase inhibitor AAI (AAI).